The chain runs to 682 residues: Potassium-transporting ATPase ATP-binding subunit (682 aa).

4 consecutive transmembrane segments (helical) span residues 34–54 (PVMF…LAMV), 58–78 (IAGS…TVLF), 219–239 (IALT…TATL), and 254–274 (VLVA…LSAI). The active-site 4-aspartylphosphate intermediate is aspartate 307. ATP-binding positions include aspartate 344, glutamate 348, 377–384 (FTAQSRMS), and lysine 395. 2 residues coordinate Mg(2+): aspartate 518 and aspartate 522. The next 3 membrane-spanning stretches (helical) occupy residues 588-608 (FAII…LNVM), 616-636 (AILS…PLAL), and 662-682 (LVVP…LGLA).

The protein belongs to the cation transport ATPase (P-type) (TC 3.A.3) family. Type IA subfamily. As to quaternary structure, the system is composed of three essential subunits: KdpA, KdpB and KdpC.

It is found in the cell inner membrane. It carries out the reaction K(+)(out) + ATP + H2O = K(+)(in) + ADP + phosphate + H(+). Its function is as follows. Part of the high-affinity ATP-driven potassium transport (or Kdp) system, which catalyzes the hydrolysis of ATP coupled with the electrogenic transport of potassium into the cytoplasm. This subunit is responsible for energy coupling to the transport system and for the release of the potassium ions to the cytoplasm. The polypeptide is Potassium-transporting ATPase ATP-binding subunit (Salmonella paratyphi B (strain ATCC BAA-1250 / SPB7)).